The chain runs to 406 residues: Phosphopentomutase (406 aa).

6 residues coordinate Mn(2+): aspartate 10, aspartate 305, histidine 310, aspartate 346, histidine 347, and histidine 358.

It belongs to the phosphopentomutase family. The cofactor is Mn(2+).

The protein resides in the cytoplasm. The catalysed reaction is 2-deoxy-alpha-D-ribose 1-phosphate = 2-deoxy-D-ribose 5-phosphate. The enzyme catalyses alpha-D-ribose 1-phosphate = D-ribose 5-phosphate. Its pathway is carbohydrate degradation; 2-deoxy-D-ribose 1-phosphate degradation; D-glyceraldehyde 3-phosphate and acetaldehyde from 2-deoxy-alpha-D-ribose 1-phosphate: step 1/2. In terms of biological role, isomerase that catalyzes the conversion of deoxy-ribose 1-phosphate (dRib-1-P) and ribose 1-phosphate (Rib-1-P) to deoxy-ribose 5-phosphate (dRib-5-P) and ribose 5-phosphate (Rib-5-P), respectively. This Vibrio campbellii (strain ATCC BAA-1116) protein is Phosphopentomutase.